Here is a 490-residue protein sequence, read N- to C-terminus: Asparagine--tRNA ligase (490 aa).

The protein belongs to the class-II aminoacyl-tRNA synthetase family. Homodimer.

The protein localises to the cytoplasm. It catalyses the reaction tRNA(Asn) + L-asparagine + ATP = L-asparaginyl-tRNA(Asn) + AMP + diphosphate + H(+). In Rhodopirellula baltica (strain DSM 10527 / NCIMB 13988 / SH1), this protein is Asparagine--tRNA ligase.